A 508-amino-acid chain; its full sequence is Light-independent protochlorophyllide reductase subunit B (508 aa).

Position 36 (Asp36) interacts with [4Fe-4S] cluster. The Proton donor role is filled by Asp294. Residue 429 to 430 (GM) coordinates substrate.

The protein belongs to the ChlB/BchB/BchZ family. In terms of assembly, protochlorophyllide reductase is composed of three subunits; ChlL, ChlN and ChlB. Forms a heterotetramer of two ChlB and two ChlN subunits. [4Fe-4S] cluster is required as a cofactor.

It carries out the reaction chlorophyllide a + oxidized 2[4Fe-4S]-[ferredoxin] + 2 ADP + 2 phosphate = protochlorophyllide a + reduced 2[4Fe-4S]-[ferredoxin] + 2 ATP + 2 H2O. Its pathway is porphyrin-containing compound metabolism; chlorophyll biosynthesis (light-independent). Component of the dark-operative protochlorophyllide reductase (DPOR) that uses Mg-ATP and reduced ferredoxin to reduce ring D of protochlorophyllide (Pchlide) to form chlorophyllide a (Chlide). This reaction is light-independent. The NB-protein (ChlN-ChlB) is the catalytic component of the complex. The polypeptide is Light-independent protochlorophyllide reductase subunit B (Rippkaea orientalis (strain PCC 8801 / RF-1) (Cyanothece sp. (strain PCC 8801))).